Here is a 971-residue protein sequence, read N- to C-terminus: GEM-interacting protein (971 aa).

Serine 19 is modified (phosphoserine). Disordered regions lie at residues 41 to 79, 231 to 267, and 383 to 476; these read AGDP…PEGP, LRAR…AQAK, and DTKK…IENG. Residues 44–56 show a composition bias toward basic and acidic residues; the sequence is PVRREDLEPDKAD. A compositionally biased stretch (polar residues) spans 59–69; it reads TVVTEENSEAS. Residues serine 75, serine 235, serine 238, serine 247, serine 436, and serine 440 each carry the phosphoserine modification. The F-BAR domain maps to 85–348; it reads EELDLRLIRT…CCVPFEPGQR (264 aa). Over residues 458-471 the composition is skewed to acidic residues; sequence SSDDFEERDPDLGD. A Phorbol-ester/DAG-type zinc finger spans residues 492–536; that stretch reads THRLRRLRGPAKCRECEAFMVSGTECEECFLTCHKRCLETLLILC. In terms of domain architecture, Rho-GAP spans 553–756; sequence LQLPRDFPEE…FLIVHYEQIF (204 aa). Threonine 659 is modified (phosphothreonine). Residues 799–865 form a disordered region; the sequence is IALDSSPDPK…LGAQSRGHFS (67 aa). The span at 805-817 shows a compositional bias: basic and acidic residues; it reads PDPKHHSALEKCP. 3 positions are modified to phosphoserine: serine 884, serine 908, and serine 924.

In terms of assembly, interacts with GEM through its N-terminal.

Stimulates, in vitro and in vivo, the GTPase activity of RhoA. In Mus musculus (Mouse), this protein is GEM-interacting protein (Gmip).